The sequence spans 118 residues: Ribonuclease P protein component (118 aa).

The protein belongs to the RnpA family. In terms of assembly, consists of a catalytic RNA component (M1 or rnpB) and a protein subunit.

The enzyme catalyses Endonucleolytic cleavage of RNA, removing 5'-extranucleotides from tRNA precursor.. Its function is as follows. RNaseP catalyzes the removal of the 5'-leader sequence from pre-tRNA to produce the mature 5'-terminus. It can also cleave other RNA substrates such as 4.5S RNA. The protein component plays an auxiliary but essential role in vivo by binding to the 5'-leader sequence and broadening the substrate specificity of the ribozyme. This chain is Ribonuclease P protein component, found in Shewanella denitrificans (strain OS217 / ATCC BAA-1090 / DSM 15013).